The chain runs to 234 residues: Orotidine 5'-phosphate decarboxylase (234 aa).

Substrate is bound by residues Asp-14, Lys-36, 63-72 (DLKFHDIPNT), Thr-123, Arg-184, Gln-193, Gly-213, and Arg-214. The Proton donor role is filled by Lys-65.

This sequence belongs to the OMP decarboxylase family. Type 1 subfamily. Homodimer.

The catalysed reaction is orotidine 5'-phosphate + H(+) = UMP + CO2. The protein operates within pyrimidine metabolism; UMP biosynthesis via de novo pathway; UMP from orotate: step 2/2. In terms of biological role, catalyzes the decarboxylation of orotidine 5'-monophosphate (OMP) to uridine 5'-monophosphate (UMP). The protein is Orotidine 5'-phosphate decarboxylase of Pseudoalteromonas translucida (strain TAC 125).